The following is a 355-amino-acid chain: UPF0421 protein BALH_2468 (355 aa).

A run of 4 helical transmembrane segments spans residues 19–39 (IAVF…IFAV), 74–94 (FTFF…FTIV), 109–129 (TLTA…AFLI), and 131–151 (LATT…ILPP).

This sequence belongs to the UPF0421 family.

The protein localises to the cell membrane. This Bacillus thuringiensis (strain Al Hakam) protein is UPF0421 protein BALH_2468.